A 512-amino-acid polypeptide reads, in one-letter code: ATP synthase subunit alpha (512 aa).

169 to 176 (GDRQTGKT) lines the ATP pocket.

This sequence belongs to the ATPase alpha/beta chains family. F-type ATPases have 2 components, CF(1) - the catalytic core - and CF(0) - the membrane proton channel. CF(1) has five subunits: alpha(3), beta(3), gamma(1), delta(1), epsilon(1). CF(0) has three main subunits: a(1), b(2) and c(9-12). The alpha and beta chains form an alternating ring which encloses part of the gamma chain. CF(1) is attached to CF(0) by a central stalk formed by the gamma and epsilon chains, while a peripheral stalk is formed by the delta and b chains.

Its subcellular location is the cell inner membrane. It carries out the reaction ATP + H2O + 4 H(+)(in) = ADP + phosphate + 5 H(+)(out). Functionally, produces ATP from ADP in the presence of a proton gradient across the membrane. The alpha chain is a regulatory subunit. The sequence is that of ATP synthase subunit alpha from Orientia tsutsugamushi (strain Boryong) (Rickettsia tsutsugamushi).